The following is a 368-amino-acid chain: Isocitrate dehydrogenase [NAD] regulatory subunit 3, mitochondrial (368 aa).

A mitochondrion-targeting transit peptide spans 1–26; sequence MARRSVSIFNRLLANPPSPFTSLSRS.

This sequence belongs to the isocitrate and isopropylmalate dehydrogenases family. Heterooligomer of catalytic and regulatory subunits. Interacts with 14-3-3-like proteins GRF1 GRF3 and GRF8. Mainly expressed at a low level in pollen.

Its subcellular location is the mitochondrion. Its function is as follows. Performs an essential role in the oxidative function of the citric acid cycle. The chain is Isocitrate dehydrogenase [NAD] regulatory subunit 3, mitochondrial (IDH3) from Arabidopsis thaliana (Mouse-ear cress).